The chain runs to 161 residues: Lipoprotein signal peptidase (161 aa).

A run of 4 helical transmembrane segments spans residues 11–31 (PLFWQVAIAGIILDQLSKLWV), 44–64 (LWSGVFHFTYVLNTGAAFSAF), 66–86 (GGAGWLKWLSLAVSVGLIIFA), and 100–120 (GCILAGAVGNGIDRFLFGHVI). Active-site residues include Asp-121 and Asp-137. A helical membrane pass occupies residues 135 to 155 (LADVSINIGIAALLWASFFPV).

The protein belongs to the peptidase A8 family.

It is found in the cell inner membrane. It carries out the reaction Release of signal peptides from bacterial membrane prolipoproteins. Hydrolyzes -Xaa-Yaa-Zaa-|-(S,diacylglyceryl)Cys-, in which Xaa is hydrophobic (preferably Leu), and Yaa (Ala or Ser) and Zaa (Gly or Ala) have small, neutral side chains.. It participates in protein modification; lipoprotein biosynthesis (signal peptide cleavage). This protein specifically catalyzes the removal of signal peptides from prolipoproteins. The protein is Lipoprotein signal peptidase of Synechocystis sp. (strain ATCC 27184 / PCC 6803 / Kazusa).